Consider the following 157-residue polypeptide: Large ribosomal subunit protein eL29 (157 aa).

The span at Met-1–Ser-26 shows a compositional bias: basic residues. A disordered region spans residues Met-1–Leu-32. At Lys-5 the chain carries N6-methyllysine. Residue Ser-31 is modified to Phosphoserine. Residue Lys-33 is modified to N6-acetyllysine. The interval Pro-121 to Glu-157 is disordered. Residues Lys-132–Lys-147 are compositionally biased toward low complexity. Phosphoserine is present on Ser-140.

It belongs to the eukaryotic ribosomal protein eL29 family. Component of the large ribosomal subunit.

It localises to the cytoplasm. Component of the large ribosomal subunit. The ribosome is a large ribonucleoprotein complex responsible for the synthesis of proteins in the cell. The polypeptide is Large ribosomal subunit protein eL29 (RPL29) (Macaca fascicularis (Crab-eating macaque)).